The chain runs to 117 residues: Large ribosomal subunit protein eL8 (117 aa).

Belongs to the eukaryotic ribosomal protein eL8 family. As to quaternary structure, part of the 50S ribosomal subunit. Part of the RNase P complex.

The protein resides in the cytoplasm. The enzyme catalyses Endonucleolytic cleavage of RNA, removing 5'-extranucleotides from tRNA precursor.. Multifunctional RNA-binding protein that recognizes the K-turn motif in ribosomal RNA, the RNA component of RNase P, box H/ACA, box C/D and box C'/D' sRNAs. Part of ribonuclease P, a protein complex that generates mature tRNA molecules by cleaving their 5'-ends, this subunit dramatically stimulates RNase P activity. This Methanococcus maripaludis (strain DSM 14266 / JCM 13030 / NBRC 101832 / S2 / LL) protein is Large ribosomal subunit protein eL8.